The primary structure comprises 366 residues: Homoserine O-acetyltransferase (366 aa).

Residues 47–349 form the AB hydrolase-1 domain; that stretch reads NAILICHALS…SGEGHDSFLL (303 aa). S153 functions as the Nucleophile in the catalytic mechanism. R221 is a substrate binding site. Residues D311 and H344 contribute to the active site. Position 345 (D345) interacts with substrate.

The protein belongs to the AB hydrolase superfamily. MetX family. In terms of assembly, homodimer.

It is found in the cytoplasm. It catalyses the reaction L-homoserine + acetyl-CoA = O-acetyl-L-homoserine + CoA. The protein operates within amino-acid biosynthesis; L-methionine biosynthesis via de novo pathway; O-acetyl-L-homoserine from L-homoserine: step 1/1. In terms of biological role, transfers an acetyl group from acetyl-CoA to L-homoserine, forming acetyl-L-homoserine. In Leptospira interrogans serogroup Icterohaemorrhagiae serovar copenhageni (strain Fiocruz L1-130), this protein is Homoserine O-acetyltransferase.